A 61-amino-acid polypeptide reads, in one-letter code: Large ribosomal subunit protein bL28 (61 aa).

Belongs to the bacterial ribosomal protein bL28 family.

The chain is Large ribosomal subunit protein bL28 from Geobacillus sp. (strain WCH70).